A 114-amino-acid polypeptide reads, in one-letter code: Small ribosomal subunit protein uS14m (114 aa).

It belongs to the universal ribosomal protein uS14 family.

Its subcellular location is the mitochondrion. The chain is Small ribosomal subunit protein uS14m (MRP2) from Eremothecium gossypii (strain ATCC 10895 / CBS 109.51 / FGSC 9923 / NRRL Y-1056) (Yeast).